Reading from the N-terminus, the 650-residue chain is Protein KINESIN LIGHT CHAIN-RELATED 3 (650 aa).

Residues 104 to 141 (EKQTGKKNVTKSNVGVGGMRKKKVGGTKLQNGNEEPSS) form a disordered region. Residues 131 to 141 (KLQNGNEEPSS) are compositionally biased toward polar residues. 10 TPR repeats span residues 192–225 (IMCL…PVVE), 235–268 (FAGL…QKKV), 277–310 (GETC…HRES), 319–353 (AADR…AANG), 359–392 (AFVD…LKTA), 401–434 (GSVY…YESH), 444–477 (ASGL…YADS), 485–518 (AGIE…LRAT), 527–560 (GIAL…LEQE), and 569–602 (LGLY…REEK).

Belongs to the kinesin light chain family.

The chain is Protein KINESIN LIGHT CHAIN-RELATED 3 from Arabidopsis thaliana (Mouse-ear cress).